Consider the following 1162-residue polypeptide: Leptin receptor (1162 aa).

A signal peptide spans 1–21; the sequence is MMCQKFYVVLLHWEFLYVIAA. Topologically, residues 22–839 are extracellular; sequence LNLAYPISPW…AIDKQQNDAG (818 aa). Intrachain disulfides connect Cys37–Cys90, Cys89–Cys99, Cys131–Cys142, Cys186–Cys195, and Cys188–Cys193. Residues Asn41, Asn56, Asn73, and Asn98 are each glycosylated (N-linked (GlcNAc...) asparagine). Asn187 carries an N-linked (GlcNAc...) asparagine glycan. The Fibronectin type-III 1 domain maps to 238–331; the sequence is PPLGLHMEVT…SPQVFTTQDV (94 aa). N-linked (GlcNAc...) asparagine glycosylation is found at Asn275 and Asn345. Positions 329 to 427 constitute an Ig-like domain; sequence QDVVYFPPKI…HRYAELYVID (99 aa). Disulfide bonds link Cys350-Cys410 and Cys411-Cys416. N-linked (GlcNAc...) asparagine glycosylation occurs at Asn431. Disulfide bonds link Cys434–Cys445, Cys471–Cys526, and Cys486–Cys496. Residues 465 to 482 are leptin-binding; the sequence is HRRSLYCPDSPSIHPTSE. N-linked (GlcNAc...) asparagine glycans are attached at residues Asn514, Asn622, Asn657, Asn668, Asn686, Asn695, Asn698, and Asn726. 3 Fibronectin type-III domains span residues 537-632, 637-729, and 738-832; these read PPSN…TLVM, PMRG…NLTF, and AVES…DAID. The short motif at 620–624 is the WSXWS motif element; that stretch reads WSNWS. A helical transmembrane segment spans residues 840–860; sequence LYVIVPIIISSCVLLLGTLLI. Residues 861–1162 lie on the Cytoplasmic side of the membrane; it reads SHQRMKKLFW…MENKMCDLTV (302 aa). Residues 869–877 carry the Box 1 motif motif; it reads FWDDVPNPK. Residue Ser880 is modified to Phosphoserine. The interval 891-896 is required for JAK2 activation; sequence ETFEHL. The interval 896-904 is required for STAT3 phosphorylation; the sequence is LFTKHAESV. Tyr985 carries the post-translational modification Phosphotyrosine; by JAK2. Tyr1077 is modified (phosphotyrosine). A Phosphotyrosine; by JAK2 modification is found at Tyr1138.

The protein belongs to the type I cytokine receptor family. Type 2 subfamily. As to quaternary structure, present as a mixture of monomers and dimers. The phosphorylated receptor binds a number of SH2 domain-containing proteins such as JAK2, STAT3, PTPN11, and SOCS3. Interaction with SOCS3 inhibits JAK/STAT signaling and MAPK cascade. On ligand binding, phosphorylated on two conserved C-terminal tyrosine residues (isoform B only) by JAK2. Tyr-985 is required for complete binding and activation of PTPN11, ERK/FOS activation,for interaction with SOCS3 and SOCS3 mediated inhibition of leptin signaling. Phosphorylation on Tyr-1138 is required for STAT3 binding/activation. Phosphorylation of Tyr-1077 has a more accessory role. In terms of tissue distribution, isoform A: highest level of expression in lung and kidney, also present in heart, brain, spleen, liver, muscle, choroid plexus and hypothalamus. Isoform B: highest levels of expression in hypothalamus and lower levels in brain, testes and adipose tissue. Expressed by neurons of the parabrachial nucleus. Expressed by peripheral blood mononuclear cells and CD4(+) T-cells. Isoform E: expressed in adipose tissue, liver, hypothalamus, cerebral microvessels, heart, and testes.

The protein resides in the cell membrane. The protein localises to the basolateral cell membrane. It localises to the secreted. Its function is as follows. Receptor for hormone LEP/leptin. On ligand binding, mediates LEP central and peripheral effects through the activation of different signaling pathways such as JAK2/STAT3 and MAPK cascade/FOS. In the hypothalamus, LEP acts as an appetite-regulating factor that induces a decrease in food intake and an increase in energy consumption by inducing anorexinogenic factors and suppressing orexigenic neuropeptides, also regulates bone mass and secretion of hypothalamo-pituitary-adrenal hormones. In the periphery, increases basal metabolism, influences reproductive function, regulates pancreatic beta-cell function and insulin secretion, is pro-angiogenic and affects innate and adaptive immunity. Control of energy homeostasis and melanocortin production (stimulation of POMC and full repression of AgRP transcription) is mediated by STAT3 signaling, whereas distinct signals regulate NPY and the control of fertility, growth and glucose homeostasis. Involved in the regulation of counter-regulatory response to hypoglycemia by inhibiting neurons of the parabrachial nucleus. Has a specific effect on T lymphocyte responses, differentially regulating the proliferation of naive and memory T-cells. Leptin increases Th1 and suppresses Th2 cytokine production. Functionally, may transport LEP across the blood-brain barrier. Binds LEP and mediates LEP endocytosis. Does not induce phosphorylation of and activate STAT3. Antagonizes Isoform A and isoform B-mediated LEP binding and endocytosis. The sequence is that of Leptin receptor (Lepr) from Mus musculus (Mouse).